A 467-amino-acid chain; its full sequence is Argininosuccinate lyase (467 aa).

Belongs to the lyase 1 family. Argininosuccinate lyase subfamily.

It is found in the cytoplasm. It carries out the reaction 2-(N(omega)-L-arginino)succinate = fumarate + L-arginine. The protein operates within amino-acid biosynthesis; L-arginine biosynthesis; L-arginine from L-ornithine and carbamoyl phosphate: step 3/3. The chain is Argininosuccinate lyase from Thioalkalivibrio sulfidiphilus (strain HL-EbGR7).